The sequence spans 314 residues: 2,3-dihydroxyphenylpropionate/2,3-dihydroxicinnamic acid 1,2-dioxygenase (314 aa).

H115 serves as the catalytic Proton donor. H179 serves as the catalytic Proton acceptor.

The protein belongs to the LigB/MhpB extradiol dioxygenase family. As to quaternary structure, homotetramer. It depends on Fe(2+) as a cofactor.

The catalysed reaction is 3-(2,3-dihydroxyphenyl)propanoate + O2 = (2Z,4E)-2-hydroxy-6-oxonona-2,4-dienedioate + H(+). The enzyme catalyses (2E)-3-(2,3-dihydroxyphenyl)prop-2-enoate + O2 = (2Z,4E,7E)-2-hydroxy-6-oxonona-2,4,7-trienedioate + H(+). Its pathway is aromatic compound metabolism; 3-phenylpropanoate degradation. In terms of biological role, catalyzes the non-heme iron(II)-dependent oxidative cleavage of 2,3-dihydroxyphenylpropionic acid and 2,3-dihydroxicinnamic acid into 2-hydroxy-6-ketononadienedioate and 2-hydroxy-6-ketononatrienedioate, respectively. The chain is 2,3-dihydroxyphenylpropionate/2,3-dihydroxicinnamic acid 1,2-dioxygenase from Cupriavidus pinatubonensis (strain JMP 134 / LMG 1197) (Cupriavidus necator (strain JMP 134)).